The sequence spans 476 residues: Stromelysin-2 (476 aa).

Residues 1–17 form the signal peptide; that stretch reads MEPLAILVLLCFPICSA. Positions 18–99 are cleaved as a propeptide — activation peptide; the sequence is YPLHGAVRQD…PRCGVPDVGG (82 aa). The Cysteine switch motif lies at 90–97; the sequence is PRCGVPDV. Cysteine 92, histidine 168, aspartate 170, histidine 183, histidine 196, and histidine 218 together coordinate Zn(2+). The active site involves glutamate 219. Histidine 222 and histidine 228 together coordinate Zn(2+). Hemopexin repeat units lie at residues 286-335, 336-382, 384-432, and 433-476; these read PVKC…WPSL, PSGL…GFPP, VKKI…FPGI, and EPQV…WLLC. The cysteines at positions 289 and 476 are disulfide-linked.

The protein belongs to the peptidase M10A family. Requires Zn(2+) as cofactor. Ca(2+) is required as a cofactor.

It localises to the secreted. The protein resides in the extracellular space. The protein localises to the extracellular matrix. The catalysed reaction is Similar to stromelysin 1, but action on collagen types III, IV and V is weak.. Can degrade fibronectin, gelatins of type I, III, IV, and V; weakly collagens III, IV, and V. Activates procollagenase. The sequence is that of Stromelysin-2 (Mmp10) from Rattus norvegicus (Rat).